The primary structure comprises 585 residues: Adenine deaminase (585 aa).

It belongs to the metallo-dependent hydrolases superfamily. Adenine deaminase family. The cofactor is Mn(2+).

It carries out the reaction adenine + H2O + H(+) = hypoxanthine + NH4(+). In Halalkalibacterium halodurans (strain ATCC BAA-125 / DSM 18197 / FERM 7344 / JCM 9153 / C-125) (Bacillus halodurans), this protein is Adenine deaminase.